The primary structure comprises 155 residues: Large ribosomal subunit protein eL24 (155 aa).

A compositionally biased stretch (basic and acidic residues) spans 98 to 129 (PEVRKAKRDDKAKADKEKKKADKAARKAEKAK). The interval 98 to 155 (PEVRKAKRDDKAKADKEKKKADKAARKAEKAKLAAAQGSKVSKQQAKGAFQKVAATSR) is disordered.

Belongs to the eukaryotic ribosomal protein eL24 family.

This chain is Large ribosomal subunit protein eL24 (RPL24), found in Candida glabrata (strain ATCC 2001 / BCRC 20586 / JCM 3761 / NBRC 0622 / NRRL Y-65 / CBS 138) (Yeast).